A 402-amino-acid polypeptide reads, in one-letter code: Deoxyguanosinetriphosphate triphosphohydrolase-like protein (402 aa).

In terms of domain architecture, HD spans 73–217 (RLTHTIEVAQ…AAIADDIAYN (145 aa)).

This sequence belongs to the dGTPase family. Type 2 subfamily.

The protein is Deoxyguanosinetriphosphate triphosphohydrolase-like protein of Brucella suis (strain ATCC 23445 / NCTC 10510).